Consider the following 55-residue polypeptide: Large ribosomal subunit protein bL33 (55 aa).

This sequence belongs to the bacterial ribosomal protein bL33 family.

In Xanthomonas oryzae pv. oryzae (strain PXO99A), this protein is Large ribosomal subunit protein bL33.